The following is a 1081-amino-acid chain: Histone demethylase-like protein A (1081 aa).

The interval 37 to 173 is disordered; that stretch reads QHLQHPSLPN…LSGNTDYARY (137 aa). Residues 66-81 show a composition bias toward low complexity; the sequence is SPSCNESNESNGETSS. The segment covering 119–132 has biased composition (polar residues); the sequence is DTSNILSGSATSVS. The span at 141–161 shows a compositional bias: low complexity; sequence NSTPPSTVNNVPSSSSITSDS. In terms of domain architecture, SWIRM spans 192-287; it reads CVTAAYACRL…FGCVEIPPAL (96 aa). Residues 902–940 are disordered; that stretch reads ATAQKKKEPPCSNGFSAPVSTSAHPTDASAPARSNNSFS. Residues 914-925 are compositionally biased toward polar residues; it reads NGFSAPVSTSAH. The segment at residues 969–1049 is a DNA-binding region (HMG box); it reads ARTGLNPFLL…TNTEIWDRWK (81 aa).

Belongs to the flavin monoamine oxidase family.

The protein resides in the nucleus. In terms of biological role, H3K4 demethylase-like protein. Might not act as a H3K4 demethylase or is not the major H3K4 demethylase since its deletion does not affect whole genome H3K4 methylation. This is Histone demethylase-like protein A from Aspergillus fumigatus (strain ATCC MYA-4609 / CBS 101355 / FGSC A1100 / Af293) (Neosartorya fumigata).